Here is a 469-residue protein sequence, read N- to C-terminus: MSSGKITQVIGPVVDVEFGSDAKLPEINNALIVYKDVNGLKTKITLEVALELGDGAVRTIAMESTDGLTRGLEVLDTGKAVSVPVGESTLGRVFNVLGDVIDGGEDFPADAERNPIHKKAPTFDELSTANEVLVTGIKVVDLLAPYLKGGKVGLFGGAGVGKTVLIQELIHNIAQEHGGISVFTGVGERTREGNDLYWEMKESGVIEKTAMVFGQMNEPPGARMRVALTGLTIAEYFRDVQGQDVLLFIDNIFRFTQAGSEVSALLGRMPSAVGYQPTLATEMGQLQERITSTKKGSVTSIQAIYVPADDYTDPAPATAFAHLDATTNLERRLTQMGIYPAVDPLASSSRALTPEIVGEEHYEVAMEVQRVLQRYKELQDIIAILGMDELSDDEKILVGRARRIQFFLSQNFHVAEQFTGQPGSYVPIDKTVHDFKEILEGKYDEVPEDAFRGVGPIEDVLAKAKSMGY.

Gly-156–Thr-163 contributes to the ATP binding site.

This sequence belongs to the ATPase alpha/beta chains family. In terms of assembly, F-type ATPases have 2 components, CF(1) - the catalytic core - and CF(0) - the membrane proton channel. CF(1) has five subunits: alpha(3), beta(3), gamma(1), delta(1), epsilon(1). CF(0) has three main subunits: a(1), b(2) and c(9-12). The alpha and beta chains form an alternating ring which encloses part of the gamma chain. CF(1) is attached to CF(0) by a central stalk formed by the gamma and epsilon chains, while a peripheral stalk is formed by the delta and b chains.

It localises to the cell membrane. The catalysed reaction is ATP + H2O + 4 H(+)(in) = ADP + phosphate + 5 H(+)(out). Functionally, produces ATP from ADP in the presence of a proton gradient across the membrane. The catalytic sites are hosted primarily by the beta subunits. This Lactococcus lactis subsp. cremoris (strain MG1363) protein is ATP synthase subunit beta.